Consider the following 380-residue polypeptide: Phthiodiolone/phenolphthiodiolone dimycocerosates ketoreductase (380 aa).

It belongs to the mer family. Phthiodiolone/phenolphthiodiolone dimycocerosates ketoreductase subfamily.

Catalyzes the reduction of the keto moiety of phthiodiolone dimycocerosates (DIM B) and glycosylated phenolphthiodiolone dimycocerosates to form the intermediate compounds phthiotriol and glycosylated phenolphthiotriol dimycocerosates during phthiocerol dimycocerosates (DIM A) and glycosylated phenolphthiocerol dimycocerosates (PGL) biosynthesis. This Mycobacterium sp. (strain JLS) protein is Phthiodiolone/phenolphthiodiolone dimycocerosates ketoreductase.